The following is a 263-amino-acid chain: Hydroxyacylglutathione hydrolase (263 aa).

Zn(2+) is bound by residues H55, H57, D59, H60, H117, D134, and H172.

The protein belongs to the metallo-beta-lactamase superfamily. Glyoxalase II family. In terms of assembly, monomer. Zn(2+) serves as cofactor.

The catalysed reaction is an S-(2-hydroxyacyl)glutathione + H2O = a 2-hydroxy carboxylate + glutathione + H(+). It participates in secondary metabolite metabolism; methylglyoxal degradation; (R)-lactate from methylglyoxal: step 2/2. In terms of biological role, thiolesterase that catalyzes the hydrolysis of S-D-lactoyl-glutathione to form glutathione and D-lactic acid. In Shewanella baltica (strain OS185), this protein is Hydroxyacylglutathione hydrolase.